We begin with the raw amino-acid sequence, 1355 residues long: MKKTMLAIILIPLVYAVAGETVADDEVFFLSAPQLDGTLIDSWGTDAVITGSTLMNRLWKTFTVSATHTLREYGRVAKSVNSTAATKCTHLCVPGTVLKLSVQATRSNANNNASWRFARPVITNMHELNETCIPMEYDCEEVISEKTSLNTLSITIYGSNDLKKALGENSTCNKTWTQGCAIATALTALYENKSVDARKLNILRGTSYTCLLGYLGIGELEPNSPCWTQLGPMCYGPLAEQVCVTAGRNPFGVVPRADRPVSTGVDCRVGSRADLQFSGLTKGLFAERGCDRVFVRCDLIDPYDPPATAAEFELHVECRSSFRVSGFPGEGEDMGLELAFNNFGLEGLIRTKQDRLTIITGIFDIRNNKYNALVINWIPTPELLDTFHMFMAELDTFRKIHRPTVRLGVVITGASPFVEQYNFKLLSGVVDMVYIHPQIQPMTSTPTLTCPMPIRSDSLECGEPHRQCPGFDGYRHLTYATRFLLGHISPEKLTLGLDVSCQLWGRRVRQYDTNWYFQDNLFSEVQGGWVSRGYITDVIQPNMTQAIQLNGCHGVFGPELDILLPSADATPYVGLLWSQPSDLEDAVDFSMALGITRFSIEGALGDVYMDSSENLKTVSTVHEAVTVRMRAHAMMEEMLGEGGLAAFDESMIWANVTRSTGTATTGARKRRALTTQGPDGVNRTIPFSASVQSGTSIVRIGTGPKMVCPGIIASVRGLLFSRTSYQGFYRLTFFQNLYVTQLQNLTGCTAVKPEDLPVITQATKVPSVFAIDINTFGVVNGSEYYVVGLEGTDLVQYSPQVKQSCAFINTNETFNQTFITIDERFFFTGPRPVADGFVIPAGINFFGSDNIMTVDYIDFNVTCMNYSNPSVQSCIATVCAANVTECTPRATLLCNQTAAILLDFQRSNELLKNSLVDLDLEHEKVKMFAPASGGSVPTSDKFGLSVAAITMSSAALVASTAALAVATLAASKIDGLQAQLDKTADVITELGDSIALISAKLDRNIRAVNGRVDDLQNQINLQMLAMDTNFKRLATGLKELGTTTNERLGEVMAYQQWYQQIMSLTNQVTQGAIQIGYKVGMIRTCVKSLLAGTMAGCPTDASSFRDHPGLTFRKTVRALLYRDQKLFIVNEVPQTLTARSVQVFIPSPTITEKKVCWPDYKLMHVDGKVVAPLECTGKYCSEPIEATDYQECLTNPSTCRYVCGDCYRGICYNRTTEDISIKFENVTHALSVSDLTSPLFNSIPQIVSMEMEIQDLKLELIQLQKINTSVHMENITGDIDAMKATIEEYRAEMAKLRVTGFGEWLKYFIYAILGVIAIGALIAIIFMAVKCYQARALLSMTAYQPVPTRPMGMMY.

The N-terminal stretch at 1-16 (MKKTMLAIILIPLVYA) is a signal peptide. N-linked (GlcNAc...) asparagine; by host glycosylation is found at Asn81, Asn112, Asn129, Asn169, Asn173, Asn192, Asn542, Asn655, Asn682, Asn744, Asn780, Asn811, Asn815, Asn860, Asn865, Asn882, Asn895, Asn1213, Asn1225, Asn1267, and Asn1274. Residues 1245 to 1299 (QIVSMEMEIQDLKLELIQLQKINTSVHMENITGDIDAMKATIEEYRAEMAKLRVT) adopt a coiled-coil conformation. Residues 1308-1328 (FIYAILGVIAIGALIAIIFMA) form a helical membrane-spanning segment.

Its subcellular location is the host membrane. The sequence is that of Probable major glycoprotein (ORF46) from Ictaluridae (bullhead catfishes).